We begin with the raw amino-acid sequence, 161 residues long: Ribosome maturation factor RimP (161 aa).

Belongs to the RimP family.

Its subcellular location is the cytoplasm. Its function is as follows. Required for maturation of 30S ribosomal subunits. This is Ribosome maturation factor RimP from Rickettsia conorii (strain ATCC VR-613 / Malish 7).